A 277-amino-acid chain; its full sequence is Probable endonuclease 4 (277 aa).

9 residues coordinate Zn(2+): His-67, His-107, Glu-141, Asp-173, His-176, His-210, Asp-223, His-225, and Glu-255.

The protein belongs to the AP endonuclease 2 family. Requires Zn(2+) as cofactor.

The enzyme catalyses Endonucleolytic cleavage to 5'-phosphooligonucleotide end-products.. Its function is as follows. Endonuclease IV plays a role in DNA repair. It cleaves phosphodiester bonds at apurinic or apyrimidinic (AP) sites, generating a 3'-hydroxyl group and a 5'-terminal sugar phosphate. The protein is Probable endonuclease 4 of Haloarcula marismortui (strain ATCC 43049 / DSM 3752 / JCM 8966 / VKM B-1809) (Halobacterium marismortui).